Here is a 786-residue protein sequence, read N- to C-terminus: Receptor-interacting serine/threonine-protein kinase 4 (786 aa).

Positions Phe-22 to Leu-286 constitute a Protein kinase domain. Residues Val-28–Val-36 and Lys-51 contribute to the ATP site. Residue Lys-51 forms a Glycyl lysine isopeptide (Lys-Gly) (interchain with G-Cter in ubiquitin) linkage. The active-site Proton acceptor is the Asp-143. Residue Lys-145 forms a Glycyl lysine isopeptide (Lys-Gly) (interchain with G-Cter in ubiquitin) linkage. Disordered regions lie at residues Glu-293–Phe-328 and Gln-347–Ser-378. Residues Lys-295–Arg-319 are compositionally biased toward basic and acidic residues. Low complexity predominate over residues Arg-357–Ser-378. ANK repeat units lie at residues Ser-439–Leu-468, Lys-472–Ala-501, Asp-505–Glu-534, Glu-538–Leu-567, Asp-571–Ala-601, Asp-605–Ile-634, Gln-638–Ala-667, Glu-671–Ala-700, Leu-704–Asp-734, and Gln-736–Leu-765.

It belongs to the protein kinase superfamily. TKL Ser/Thr protein kinase family. In terms of assembly, interacts with PRKCB. Interacts with TRAF1, TRAF2, TRAF3 and TRAF5. Interacts with BIRC2/c-IAP1, BIRC3/c-IAP2 and XIAP/BIRC4. May be phosphorylated by MAP3K2 and MAP3K3. In terms of processing, proteolytically cleaved by during Fas-induced apoptosis. Cleavage at Asp-342 and Asp-380. Post-translationally, polyubiquitinated with 'Lys-48' and 'Lys-63'-linked chains by BIRC2/c-IAP1 and BIRC3/c-IAP2, leading to activation of NF-kappa-B. As to expression, expressed in the epidermis of the skin (at protein level). Ubiquitously expressed, with an abundant expression in the thymus, bone marrow, pro-B, pre-B and immature B cells and a weak expression in the spleen.

Its subcellular location is the cytoplasm. It is found in the membrane. It carries out the reaction L-seryl-[protein] + ATP = O-phospho-L-seryl-[protein] + ADP + H(+). It catalyses the reaction L-threonyl-[protein] + ATP = O-phospho-L-threonyl-[protein] + ADP + H(+). Serine/threonine protein kinase. Required for embryonic skin development and correct skin homeostasis in adults, via phosphorylation of PKP1 and subsequent promotion of keratinocyte differentiation and cell adhesion. It is a direct transcriptional target of TP63. Plays a role in NF-kappa-B activation. The chain is Receptor-interacting serine/threonine-protein kinase 4 (Ripk4) from Mus musculus (Mouse).